A 424-amino-acid polypeptide reads, in one-letter code: Riboflavin biosynthesis protein RibBA (424 aa).

The DHBP synthase stretch occupies residues 1 to 204 (MTRFDSIERA…IADLIAWRRK (204 aa)). D-ribulose 5-phosphate is bound by residues 28–29 (RE), Asp33, 141–145 (RPGHT), and Glu165. Residue Glu29 coordinates Mg(2+). His144 contacts Mg(2+). Positions 205–424 (HEKHVLRIAE…QNTAQPGTAL (220 aa)) are GTP cyclohydrolase II. Residue 259-263 (RVHSE) participates in GTP binding. Cys264, Cys275, and Cys277 together coordinate Zn(2+). GTP contacts are provided by residues Gln280, 303–305 (EGR), and Thr325. The active-site Proton acceptor; for GTP cyclohydrolase activity is the Asp337. The active-site Nucleophile; for GTP cyclohydrolase activity is Arg339. Thr360 and Lys365 together coordinate GTP.

This sequence in the N-terminal section; belongs to the DHBP synthase family. The protein in the C-terminal section; belongs to the GTP cyclohydrolase II family. It depends on Mg(2+) as a cofactor. Requires Mn(2+) as cofactor. The cofactor is Zn(2+).

It carries out the reaction D-ribulose 5-phosphate = (2S)-2-hydroxy-3-oxobutyl phosphate + formate + H(+). The enzyme catalyses GTP + 4 H2O = 2,5-diamino-6-hydroxy-4-(5-phosphoribosylamino)-pyrimidine + formate + 2 phosphate + 3 H(+). It functions in the pathway cofactor biosynthesis; riboflavin biosynthesis; 2-hydroxy-3-oxobutyl phosphate from D-ribulose 5-phosphate: step 1/1. It participates in cofactor biosynthesis; riboflavin biosynthesis; 5-amino-6-(D-ribitylamino)uracil from GTP: step 1/4. Functionally, catalyzes the conversion of D-ribulose 5-phosphate to formate and 3,4-dihydroxy-2-butanone 4-phosphate. In terms of biological role, catalyzes the conversion of GTP to 2,5-diamino-6-ribosylamino-4(3H)-pyrimidinone 5'-phosphate (DARP), formate and pyrophosphate. The protein is Riboflavin biosynthesis protein RibBA of Rhodococcus erythropolis (strain PR4 / NBRC 100887).